Reading from the N-terminus, the 88-residue chain is Long neurotoxin 31 (88 aa).

Residues M1 to S21 form the signal peptide. Disulfide bonds link C24–C42, C35–C63, C48–C52, C67–C78, and C79–C84.

This sequence belongs to the three-finger toxin family. Long-chain subfamily. Type II alpha-neurotoxin sub-subfamily. As to expression, expressed by the venom gland.

The protein localises to the secreted. Its function is as follows. Binds with high affinity to muscular (alpha-1/CHRNA1) and neuronal (alpha-7/CHRNA7) nicotinic acetylcholine receptor (nAChR) and inhibits acetylcholine from binding to the receptor, thereby impairing neuromuscular and neuronal transmission. This chain is Long neurotoxin 31, found in Drysdalia coronoides (White-lipped snake).